The sequence spans 137 residues: Putative pre-16S rRNA nuclease (137 aa).

It belongs to the YqgF nuclease family.

It localises to the cytoplasm. In terms of biological role, could be a nuclease involved in processing of the 5'-end of pre-16S rRNA. The polypeptide is Putative pre-16S rRNA nuclease (Clostridium kluyveri (strain NBRC 12016)).